A 276-amino-acid chain; its full sequence is Zinc transporter ZTP29 (276 aa).

Residues 1-6 (MDSQML) lie on the Cytoplasmic side of the membrane. Residues 7 to 27 (VALGLSLVGGLSTSLGALFVV) form a helical membrane-spanning segment. Residues 28 to 35 (LSETPNMK) lie on the Lumenal side of the membrane. The helical transmembrane segment at 36 to 56 (MLGLLQGFASGLMLSISFLDL) threads the bilayer. At 57–63 (AHNAINS) the chain is on the cytoplasmic side. Residues 64-84 (IGFFKANLWFFGGVIFFACIT) traverse the membrane as a helical segment. Residues 85-123 (KFIPEPTLGPSTDGKRRKKNGDEGGKDMMKKHRKQVLYS) lie on the Lumenal side of the membrane. Residues 124-144 (GLITAIGISLHNFPEGMAVFL) form a helical membrane-spanning segment. Topologically, residues 145 to 156 (GSIKGMRVGVNL) are cytoplasmic. The chain crosses the membrane as a helical span at residues 157-177 (ALAIALHNIPEGVAVALPIYF). Residues 178 to 187 (ATESKWQAFK) are Lumenal-facing. Residues 188–208 (LATLSGLAEPLGVIIVAYLFP) traverse the membrane as a helical segment. The Cytoplasmic portion of the chain corresponds to 209-219 (RSLSPEILEGL). A helical membrane pass occupies residues 220–240 (LGAVGGIMAFLTLHEMLPLAF). Over 241 to 250 (DYAGQKQAVK) the chain is Lumenal. The chain crosses the membrane as a helical span at residues 251-271 (AVFFGMACMSASLYFLELSLP). Topologically, residues 272 to 276 (ETMSL) are cytoplasmic.

Belongs to the ZIP transporter (TC 2.A.5) family. ZupT subfamily. Expressed in hypocotyls, cotyledons, leaves and anthers.

It is found in the endoplasmic reticulum membrane. Its function is as follows. Zinc transporter involved response to salt stress. May act through the regulation of zinc levels required to induce the unfolded protein response (UPR) pathway. The chain is Zinc transporter ZTP29 (ZTP29) from Arabidopsis thaliana (Mouse-ear cress).